Reading from the N-terminus, the 285-residue chain is Heterogeneous nuclear ribonucleoprotein A/B (285 aa).

Positions M1–I65 are disordered. Positions E25–A43 are enriched in low complexity. RRM domains are found at residues G75–V158 and K159–E238. At S87 the chain carries Phosphoserine. Glycyl lysine isopeptide (Lys-Gly) (interchain with G-Cter in SUMO2) cross-links involve residues K136 and K208. K220 is subject to N6-acetyllysine. The interval V239–Y285 is disordered. S247 bears the Phosphoserine mark. R250 is subject to Dimethylated arginine; alternate. R250 is modified (omega-N-methylarginine; alternate). R255 and R258 each carry omega-N-methylarginine. K271 carries the N6-acetyllysine modification. Dimethylated arginine; alternate is present on R275. R275 bears the Omega-N-methylarginine; alternate mark. At R275 the chain carries Asymmetric dimethylarginine; alternate.

Identified in a IGF2BP1-dependent mRNP granule complex containing untranslated mRNAs. Interacts with APOBEC1. Ubiquitous.

It is found in the nucleus. The protein resides in the cytoplasm. In terms of biological role, transcriptional repressor. Binds to CArG box motifs, single-stranded and double-stranded DNA, and RNA. It may be that repression by CBF-A is a result of competitive binding of CBF, a putative positive factor, and CBF-A to the same or overlapping motifs around the CArG boxes. The protein is Heterogeneous nuclear ribonucleoprotein A/B (Hnrnpab) of Mus musculus (Mouse).